Reading from the N-terminus, the 134-residue chain is Lymphocyte antigen 6A-2/6E-1 (134 aa).

Positions 1–26 (MDTSHTTKSCLLILLVALLCAERAQG) are cleaved as a signal peptide. The 93-residue stretch at 27–119 (LECYQCYGVP…NGGSTWTMAG (93 aa)) folds into the UPAR/Ly6 domain. 5 cysteine pairs are disulfide-bonded: cysteine 29–cysteine 53, cysteine 32–cysteine 41, cysteine 46–cysteine 74, cysteine 78–cysteine 98, and cysteine 99–cysteine 104. Glycine 112 is lipidated: GPI-anchor amidated glycine. Residues 113–134 (STWTMAGVLLFSLSSVLLQTLL) constitute a propeptide, removed in mature form.

Post-translationally, O-glycosylated. Not N-glycosylated. Not phosphorylated. As to expression, widely expressed.

It localises to the cell membrane. Functionally, T-cell activation. The polypeptide is Lymphocyte antigen 6A-2/6E-1 (Ly6a) (Mus musculus (Mouse)).